Here is a 446-residue protein sequence, read N- to C-terminus: Chromosomal replication initiator protein DnaA (446 aa).

The domain I, interacts with DnaA modulators stretch occupies residues 1-72; the sequence is MENILDLWNK…ADTIYELTGE (72 aa). A domain II region spans residues 72–109; sequence EELSIKFIIPQNQDEVEAMPKSPIKKMSKEDPVDIPQN. The tract at residues 110–326 is domain III, AAA+ region; it reads MLNPKYTFDT…GALIRVVAYS (217 aa). Residues Gly-154, Gly-156, Lys-157, and Thr-158 each coordinate ATP. The domain IV, binds dsDNA stretch occupies residues 327 to 446; it reads SLINKDINAD…HVKEIKEQLK (120 aa).

This sequence belongs to the DnaA family. Oligomerizes as a right-handed, spiral filament on DNA at oriC.

The protein resides in the cytoplasm. Functionally, plays an essential role in the initiation and regulation of chromosomal replication. ATP-DnaA binds to the origin of replication (oriC) to initiate formation of the DNA replication initiation complex once per cell cycle. Binds the DnaA box (a 9 base pair repeat at the origin) and separates the double-stranded (ds)DNA. Forms a right-handed helical filament on oriC DNA; dsDNA binds to the exterior of the filament while single-stranded (ss)DNA is stabiized in the filament's interior. The ATP-DnaA-oriC complex binds and stabilizes one strand of the AT-rich DNA unwinding element (DUE), permitting loading of DNA polymerase. After initiation quickly degrades to an ADP-DnaA complex that is not apt for DNA replication. Binds acidic phospholipids. This is Chromosomal replication initiator protein DnaA from Bacillus pumilus (strain SAFR-032).